The primary structure comprises 305 residues: Oxidoreductase swnR (305 aa).

The protein belongs to the NmrA-type oxidoreductase family. Isoflavone reductase subfamily.

The enzyme catalyses L-pipecolate + O2 = L-1-piperideine-6-carboxylate + H2O2 + H(+). It functions in the pathway mycotoxin biosynthesis. Functionally, oxidoreductase; part of the gene cluster that mediates the biosynthesis of swainsonine (SW), a cytotoxic fungal alkaloid and a potential cancer therapy drug. Swainsonine production occurs via a multibranched pathway and is dispensable for fungal colonization of plants and infection of insect hosts. The first step of swainsonine biosynthesis is the production of the precursor pipecolic acid (PA) via conversion of L-lysine (Lys) to 1-piperideine-6-carboxylate (P6C) by the aminotransferase swnA, the latter being further reduced to PA by the reductase swnR. The PKS-NRPS hybrid synthetase swnK uptakes and condensates PA and malonyl-CoA with and without skipping of the ketoreductase (KR) domain in order to produce 3 intermediates, 1-oxoindolizidine, (1S)-1-hydroxyindolizin, and (1R)-1-hydroxyindolizine; with the transisomer (1S)-1-hydroxyindolizin being predominant. The terminal thioester reductase (TE) domain of swnK is involved in reduction of the thioester bond to release the intermediate aldehydes. The oxidoreductase swnN could contribute to the reduction of 1-oxoindolizidine to (1S)-1-hydroxyindolizin and (1R)-1-hydroxyindolizine, contributing to the major route of SW production. The dioxygenase swnH2 would be responsible for the oxidization of (1R)-1-hydroxyindolizine into (1R,2S)-1,2-dihydroxyindolizine and of (1S)-1-hydroxyindolizin to yield both (1R,2S)-1,2-dihydroxyindolizine and (1S,2S)-1,2-dihydroxyindolizine. The dioxygenase swnH1 then performs the conversion of the 1,2-dihydroxyindolizine epimers to SW. The sequence is that of Oxidoreductase swnR from Arthroderma benhamiae (strain ATCC MYA-4681 / CBS 112371) (Trichophyton mentagrophytes).